The sequence spans 440 residues: Ribulose bisphosphate carboxylase large chain (440 aa).

Lys4 is modified (N6,N6,N6-trimethyllysine). Residues Asn113 and Thr163 each coordinate substrate. Lys165 functions as the Proton acceptor in the catalytic mechanism. Substrate is bound at residue Lys167. Positions 191, 193, and 194 each coordinate Mg(2+). Lys191 is modified (N6-carboxylysine). The Proton acceptor role is filled by His284. Substrate contacts are provided by Arg285, His317, and Ser369.

Belongs to the RuBisCO large chain family. Type I subfamily. In terms of assembly, heterohexadecamer of 8 large chains and 8 small chains; disulfide-linked. The disulfide link is formed within the large subunit homodimers. Mg(2+) serves as cofactor. Post-translationally, the disulfide bond which can form in the large chain dimeric partners within the hexadecamer appears to be associated with oxidative stress and protein turnover.

The protein resides in the plastid. It localises to the chloroplast. It carries out the reaction 2 (2R)-3-phosphoglycerate + 2 H(+) = D-ribulose 1,5-bisphosphate + CO2 + H2O. The catalysed reaction is D-ribulose 1,5-bisphosphate + O2 = 2-phosphoglycolate + (2R)-3-phosphoglycerate + 2 H(+). Its function is as follows. RuBisCO catalyzes two reactions: the carboxylation of D-ribulose 1,5-bisphosphate, the primary event in carbon dioxide fixation, as well as the oxidative fragmentation of the pentose substrate in the photorespiration process. Both reactions occur simultaneously and in competition at the same active site. This Onoclea sensibilis (Sensitive fern) protein is Ribulose bisphosphate carboxylase large chain.